We begin with the raw amino-acid sequence, 360 residues long: Protein OSB4, chloroplastic (360 aa).

The N-terminal 61 residues, 1-61 (MQFLGRSISK…AEKSSEEWPR (61 aa)), are a transit peptide targeting the chloroplast. Residues 28–64 (SQQFLSTSSTESSSRTRGGGGGNRAEKSSEEWPRPME) are disordered. Low complexity predominate over residues 33-43 (STSSTESSSRT). Residues 51-61 (RAEKSSEEWPR) show a composition bias toward basic and acidic residues. Positions 71 to 188 (IANSIDLIGY…VMVRDLHYIE (118 aa)) constitute an SSB domain. PDF region stretches follow at residues 224–276 (WFDL…SELK) and 296–344 (WKDL…EKLP).

The protein localises to the plastid. It localises to the chloroplast. In terms of biological role, binds single-stranded DNA. This is Protein OSB4, chloroplastic (OSB4) from Arabidopsis thaliana (Mouse-ear cress).